Reading from the N-terminus, the 162-residue chain is SCF ubiquitin ligase complex protein SKP1a (162 aa).

Ser2 carries the post-translational modification N-acetylserine. The tract at residues 100–162 (ILAANYLDIK…NEWCEDKGGN (63 aa)) is interaction with the F-box domain of F-box proteins. Pro143 bears the 4-hydroxyproline mark. O-linked (GlcNAc...) hydroxyproline glycosylation occurs at Pro143.

The protein belongs to the SKP1 family. As to quaternary structure, multiprotein complex (SCF) with cullin and F-box-containing protein. Capable of undergoing aggregation. O-linked glycan consists of linear Gal-Gal-Fuc-Gal-GlcNAc. In terms of processing, fpaA and fpaB seem to be identically glycosylated. Glycosylation is required for nuclear enrichment. Post-translationally, hydroxylated by phyA.

Its subcellular location is the cytoplasm. It is found in the nucleus. This chain is SCF ubiquitin ligase complex protein SKP1a (fpaA), found in Dictyostelium discoideum (Social amoeba).